The chain runs to 662 residues: Hypoxia-inducible factor 3-alpha (662 aa).

The segment at 1 to 25 is disordered; the sequence is MDWDQDRSNTELRKEKSRDAARSRR. In terms of domain architecture, bHLH spans 12–65; that stretch reads LRKEKSRDAARSRRSQETEVLYQLAHTLPFARGVSAHLDKASIMRLTISYLRMH. The tract at residues 75–98 is nuclear localization signal (isoform 2); it reads QVEKGGEPLDACYLKALEGFVMVL. 2 PAS domains span residues 80–150 and 225–295; these read GEPL…PNLS and PHPA…LSKG. Residues 228–272 form a nuclear export signal (isoform 2) region; the sequence is ASLEPPLGRGAFLSRHSLDMKFTYCDERIAEVAGYSPDDLIGCSA. Disordered regions lie at residues 352–377 and 416–446; these read EQTEQHTRRPPRLSASSQKGIPGNSV and PILDGPPPAATPSTPQATRRPQSPLPADLPD. Residues 414-418 carry the LRRLL motif; it reads MAPIL. The segment covering 426 to 437 has biased composition (low complexity); that stretch reads TPSTPQATRRPQ. The tract at residues 448 to 581 is ODD; sequence LTVGLENAHR…SEDKGLELLE (134 aa). Residues 450–501 are NTAD; sequence VGLENAHRLSTAQKNKTVETDLDIAQDPDTLDLEMLAPYISMDDDFQLNSSE. Residue K463 forms a Glycyl lysine isopeptide (Lys-Gly) (interchain with G-Cter in ubiquitin) linkage. Residues 485 to 492 carry the LAPYISMD motif; sequence LAPYISMD. At P487 the chain carries 4-hydroxyproline. The tract at residues 500 to 595 is disordered; the sequence is SEQLPKVHRR…KRSPRLEPGS (96 aa). Over residues 505–521 the composition is skewed to basic residues; that stretch reads KVHRRPPRVARRPRARS. K565 participates in a covalent cross-link: Glycyl lysine isopeptide (Lys-Gly) (interchain with G-Cter in ubiquitin). Residues 572 to 584 show a composition bias toward basic and acidic residues; the sequence is SEDKGLELLETKP.

Isoform 1 interacts with ARNT. Isoform 2 interacts with HIF1A. Isoform 2 interacts EPAS1. Isoform 2 interacts (via C-terminus domain) with BAD; the interaction reduces the binding between BAD and BAX. Isoform 2 (via C-terminus domain) interacts with BCL2L2 and MCL1. Interacts with VHL. In normoxia, hydroxylated on Pro-487 in the oxygen-dependent degradation domain (ODD) by PHD. The hydroxylated proline promotes interaction with VHL, initiating rapid ubiquitination and subsequent proteasomal degradation. Post-translationally, ubiquitinated; ubiquitination occurs in a VHL- and oxygen-dependent pathway and subsequently targeted for proteasomal degradation. As to expression, isoform 3 is expressed in endothelial cells of vessels and capillaries in alveoli of the neonatal lung (at protein level). Expressed in lung, brain, heart and kidney. Isoform 2 is expressed in heart and lung. Isoform 2 is highly expressed in the epithelial cell layer of the cornea with lower expression in the layers of ganglion cells, inner nuclear cells, and rods and cones of the retina. Isoform 2 is expressed in the cerebellum only in the Purkinje cell layer.

The protein localises to the nucleus. The protein resides in the cytoplasm. It is found in the nucleus speckle. It localises to the mitochondrion. Acts as a transcriptional regulator in adaptive response to low oxygen tension. Acts as a regulator of hypoxia-inducible gene expression. Plays a role in the development of the cardiorespiratory system. Its function is as follows. Acts as a positive regulator of hypoxia-inducible gene expression. Associates to core DNA sequence 5'-TACGTG-3' within the hypoxia response element (HRE) of target gene promoters in a ARNT-dependent manner, and hence also participates in the transcriptional activation of reporter genes driven by HRE. Functionally, attenuates the ability of transcription factor HIF1A, EPAS1 and the HIF1A-ARNT complex to bind to hypoxia-responsive elements (HRE) located within the enhancer/promoter of hypoxia-inducible target genes and hence inhibits HRE-driven transcriptional activation. Functions as an inhibitor of angiogenesis in hypoxic cells of the cornea. May act as a tumor suppressor. May also be involved in apoptosis. In terms of biological role, attenuates the ability of transcription factor HIF1A, EPAS1 and the HIF1A-ARNT complex to bind to hypoxia-responsive elements (HRE) located within the enhancer/promoter of hypoxia-inducible target genes and hence inhibits HRE-driven transcriptional activation. Also plays a role in the development of the lung and heart during embryonic and neonatal stages. This chain is Hypoxia-inducible factor 3-alpha, found in Mus musculus (Mouse).